We begin with the raw amino-acid sequence, 770 residues long: Molybdenum cofactor sulfurase (770 aa).

K243 carries the post-translational modification N6-(pyridoxal phosphate)lysine. The active site involves C405. An MOSC domain is found at 611-769 (GDEVANWLCQ…LACGDPITVL (159 aa)). S726 is modified (phosphoserine).

This sequence belongs to the class-V pyridoxal-phosphate-dependent aminotransferase family. MOCOS subfamily. Pyridoxal 5'-phosphate serves as cofactor.

It catalyses the reaction Mo-molybdopterin + L-cysteine + AH2 = thio-Mo-molybdopterin + L-alanine + A + H2O. It functions in the pathway cofactor biosynthesis; molybdopterin biosynthesis. Its function is as follows. Sulfurates the molybdenum cofactor. Sulfation of molybdenum is essential for xanthine dehydrogenase (XDH) and aldehyde oxidase (ADO) enzymes in which molybdenum cofactor is liganded by 1 oxygen and 1 sulfur atom in active form. The chain is Molybdenum cofactor sulfurase from Drosophila grimshawi (Hawaiian fruit fly).